A 382-amino-acid chain; its full sequence is Queuine tRNA-ribosyltransferase (382 aa).

Catalysis depends on aspartate 93, which acts as the Proton acceptor. Residues 93 to 97, aspartate 147, glutamine 191, and glycine 218 each bind substrate; that span reads DSGGF. The RNA binding stretch occupies residues 249 to 255; sequence GVGKPED. Aspartate 268 acts as the Nucleophile in catalysis. The segment at 273 to 277 is RNA binding; important for wobble base 34 recognition; it reads TRNAR. Zn(2+) contacts are provided by cysteine 306, cysteine 308, cysteine 311, and histidine 337.

Belongs to the queuine tRNA-ribosyltransferase family. In terms of assembly, homodimer. Within each dimer, one monomer is responsible for RNA recognition and catalysis, while the other monomer binds to the replacement base PreQ1. It depends on Zn(2+) as a cofactor.

The enzyme catalyses 7-aminomethyl-7-carbaguanine + guanosine(34) in tRNA = 7-aminomethyl-7-carbaguanosine(34) in tRNA + guanine. It participates in tRNA modification; tRNA-queuosine biosynthesis. Catalyzes the base-exchange of a guanine (G) residue with the queuine precursor 7-aminomethyl-7-deazaguanine (PreQ1) at position 34 (anticodon wobble position) in tRNAs with GU(N) anticodons (tRNA-Asp, -Asn, -His and -Tyr). Catalysis occurs through a double-displacement mechanism. The nucleophile active site attacks the C1' of nucleotide 34 to detach the guanine base from the RNA, forming a covalent enzyme-RNA intermediate. The proton acceptor active site deprotonates the incoming PreQ1, allowing a nucleophilic attack on the C1' of the ribose to form the product. After dissociation, two additional enzymatic reactions on the tRNA convert PreQ1 to queuine (Q), resulting in the hypermodified nucleoside queuosine (7-(((4,5-cis-dihydroxy-2-cyclopenten-1-yl)amino)methyl)-7-deazaguanosine). In Haemophilus influenzae (strain 86-028NP), this protein is Queuine tRNA-ribosyltransferase.